A 347-amino-acid chain; its full sequence is NADH-ubiquinone oxidoreductase chain 2 (347 aa).

Helical transmembrane passes span 1–21 (MNPLIFTTIVLTIIMGTMIVM), 25–45 (HWLTVWIGFEMNMLAVIPILM), 59–79 (YFLTQATASMLLMLAIIINLL), 96–116 (IIMTLAMAMKLGLSPFHFWVP), 122–142 (IQLSSGLILLTWQKLAPMSIL), 145–165 (IFPTINLNLMLLMSVLSVAIG), 178–198 (IMAYSSIAHMGWMTAIMAYNP), 201–221 (TLLNLVIYILLTTTTFMMFML), 237–257 (APLLTMTILTIMLSMGGLPPL), 276–296 (IITPTIMAVTALLNLYFYMRL), and 326–346 (VSPLIILSTLALPLSPILMLL).

Belongs to the complex I subunit 2 family. In terms of assembly, core subunit of respiratory chain NADH dehydrogenase (Complex I) which is composed of 45 different subunits. Interacts with TMEM242.

It is found in the mitochondrion inner membrane. It carries out the reaction a ubiquinone + NADH + 5 H(+)(in) = a ubiquinol + NAD(+) + 4 H(+)(out). Core subunit of the mitochondrial membrane respiratory chain NADH dehydrogenase (Complex I) which catalyzes electron transfer from NADH through the respiratory chain, using ubiquinone as an electron acceptor. Essential for the catalytic activity and assembly of complex I. This Boneia bidens (Manado fruit bat) protein is NADH-ubiquinone oxidoreductase chain 2.